Here is a 384-residue protein sequence, read N- to C-terminus: Omega-6 fatty acid desaturase, endoplasmic reticulum (384 aa).

Residues 1–23 (MGAGGRMQVSPSPKKSETDTLKR) are disordered. Over residues 14–23 (KKSETDTLKR) the composition is skewed to basic and acidic residues. The next 2 helical transmembrane spans lie at 56-76 (LIWDIIVASCFYYVATTYFPL) and 84-104 (VAWPLYWACQGVVLTGVWVIA). Residues 105 to 109 (HECGH) carry the Histidine box-1 motif. A helical transmembrane segment spans residues 117–137 (WLDDTVGLIFHSFLLVPYFSW). The Histidine box-2 motif lies at 141–145 (HRRHH). 3 helical membrane passes run 180–200 (VMLTVQFTLGWPLYWAFNVSG), 226–246 (IYVSDAGILAVCYGLYRYAAA), and 253–273 (VCLYGVPLLIVNAFLVLITYL). A Histidine box-3 motif is present at residues 316–320 (HVAHH).

The protein belongs to the fatty acid desaturase type 1 family.

It localises to the endoplasmic reticulum membrane. It participates in lipid metabolism; polyunsaturated fatty acid biosynthesis. In terms of biological role, ER (microsomal) omega-6 fatty acid desaturase introduces the second double bond in the biosynthesis of 18:3 fatty acids, important constituents of plant membranes. It is thought to use cytochrome b5 as an electron donor and to act on fatty acids esterified to phosphatidylcholine and, possibly, other phospholipids. In Brassica juncea (Indian mustard), this protein is Omega-6 fatty acid desaturase, endoplasmic reticulum.